Consider the following 277-residue polypeptide: Myelin proteolipid protein (277 aa).

Over 2–9 (GLLECCAR) the chain is Cytoplasmic. S-palmitoyl cysteine attachment occurs at residues Cys-6, Cys-7, and Cys-10. The chain crosses the membrane as a helical span at residues 10-36 (CLVGAPFASLVATGLCFFGVALFCGCG). Residues 37 to 63 (HEALTGTEKLIETYFSKNYQDYEYLIN) are Extracellular-facing. A helical transmembrane segment spans residues 64–88 (VIHAFQYVIYGTASFFFLYGALLLA). Residues 89–151 (EGFYTTGAVR…LGKWLGHPDK (63 aa)) are Cytoplasmic-facing. Cys-109 carries the S-palmitoyl cysteine lipid modification. Ser-114 bears the Phosphoserine mark. 2 positions are modified to phosphothreonine: Thr-116 and Thr-118. 2 S-palmitoyl cysteine lipidation sites follow: Cys-139 and Cys-141. Residues 152–177 (FVGITYALTVVWLLVFACSAVPVYIY) form a helical membrane-spanning segment. At 178-233 (FNTWTTCQSIAFPSKTSASIGSLCADARMYGVLPWNAFPGKVCGSNLLSICKTAEF) the chain is on the extracellular side. 2 disulfide bridges follow: Cys-184-Cys-228 and Cys-201-Cys-220. The O-palmitoyl serine moiety is linked to residue Ser-199. The helical transmembrane segment at 234-260 (QMTFHLFIAAFVGAAATLVSLLTFMIA) threads the bilayer. Residues 261 to 277 (ATYNFAVLKLMGRGTKF) lie on the Cytoplasmic side of the membrane.

This sequence belongs to the myelin proteolipid protein family. Interacts with MAL.

The protein resides in the cell membrane. It localises to the myelin membrane. In terms of biological role, this is the major myelin protein from the central nervous system. It plays an important role in the formation or maintenance of the multilamellar structure of myelin. The polypeptide is Myelin proteolipid protein (Plp1) (Mus musculus (Mouse)).